Reading from the N-terminus, the 61-residue chain is MAKTSMVAKQQKKQKYAVREYTRCERCGRPHSVYRKFKLCRICFRELAYKGQIPGVRKASW.

Residues Cys24, Cys27, Cys40, and Cys43 each coordinate Zn(2+).

It belongs to the universal ribosomal protein uS14 family. Zinc-binding uS14 subfamily. In terms of assembly, part of the 30S ribosomal subunit. Contacts proteins S3 and S10. It depends on Zn(2+) as a cofactor.

In terms of biological role, binds 16S rRNA, required for the assembly of 30S particles and may also be responsible for determining the conformation of the 16S rRNA at the A site. The chain is Small ribosomal subunit protein uS14 from Staphylococcus aureus (strain USA300 / TCH1516).